Here is a 940-residue protein sequence, read N- to C-terminus: Protein translocase subunit SecA (940 aa).

ATP-binding positions include Gln87, 105–109 (GEGKT), and Asp494. Residues 879–940 (AQQQKKAVEG…KCHGASEASV (62 aa)) are disordered. The segment covering 884-898 (KAVEGRATADGKLDE) has biased composition (basic and acidic residues). Positions 900 to 915 (SVAAAARPAAASRPAV) are enriched in low complexity. 4 residues coordinate Zn(2+): Cys921, Cys923, Cys932, and His933.

It belongs to the SecA family. In terms of assembly, monomer and homodimer. Part of the essential Sec protein translocation apparatus which comprises SecA, SecYEG and auxiliary proteins SecDF-YajC and YidC. The cofactor is Zn(2+).

Its subcellular location is the cell inner membrane. The protein resides in the cytoplasm. It catalyses the reaction ATP + H2O + cellular proteinSide 1 = ADP + phosphate + cellular proteinSide 2.. Functionally, part of the Sec protein translocase complex. Interacts with the SecYEG preprotein conducting channel. Has a central role in coupling the hydrolysis of ATP to the transfer of proteins into and across the cell membrane, serving as an ATP-driven molecular motor driving the stepwise translocation of polypeptide chains across the membrane. This is Protein translocase subunit SecA from Myxococcus xanthus (strain DK1622).